The chain runs to 210 residues: Isomeliandiol synthase ISM1 (210 aa).

The next 5 membrane-spanning stretches (helical) occupy residues 17–37, 50–70, 107–127, 135–155, and 172–192; these read FTLH…TWFI, LLCW…YFVF, IEGM…YAIV, ILQF…FLTA, and YYVG…INFW. In terms of domain architecture, EXPERA spans 46-188; the sequence is GDRLLLCWWA…IWIIVPSLIA (143 aa).

This sequence belongs to the EBP family.

The protein resides in the membrane. It catalyses the reaction 7,8-epoxymelianol = isomeliandiol. It participates in secondary metabolite biosynthesis; terpenoid biosynthesis. Isomerase involved in the biosynthesis of limonoids and quassinoids triterpene natural products such as ailanthone, chaparrinone, glaucarubinone and amarolide, allelopathic degraded triterpene lactones inhibiting the growth of other plants, and possessing antimalarial, antifeedant, insecticidal, anti-inflammatory and anticancer activities. Catalyzes the conversion of 7,8-epoxymelianol to isomeliandiol via skeletal rearrangements. This is Isomeliandiol synthase ISM1 from Ailanthus altissima (Tree-of-heaven).